A 486-amino-acid chain; its full sequence is Glutamyl-tRNA(Gln) amidotransferase subunit A (486 aa).

Residues Lys78 and Ser153 each act as charge relay system in the active site. The active-site Acyl-ester intermediate is the Ser177.

The protein belongs to the amidase family. GatA subfamily. In terms of assembly, heterotrimer of A, B and C subunits.

It carries out the reaction L-glutamyl-tRNA(Gln) + L-glutamine + ATP + H2O = L-glutaminyl-tRNA(Gln) + L-glutamate + ADP + phosphate + H(+). In terms of biological role, allows the formation of correctly charged Gln-tRNA(Gln) through the transamidation of misacylated Glu-tRNA(Gln) in organisms which lack glutaminyl-tRNA synthetase. The reaction takes place in the presence of glutamine and ATP through an activated gamma-phospho-Glu-tRNA(Gln). The protein is Glutamyl-tRNA(Gln) amidotransferase subunit A of Syntrophobacter fumaroxidans (strain DSM 10017 / MPOB).